A 404-amino-acid polypeptide reads, in one-letter code: S-adenosylmethionine synthase (404 aa).

Residue 141 to 146 coordinates ATP; the sequence is GQGSVD.

It belongs to the AdoMet synthase 2 family. Mg(2+) is required as a cofactor.

It carries out the reaction L-methionine + ATP + H2O = S-adenosyl-L-methionine + phosphate + diphosphate. The protein operates within amino-acid biosynthesis; S-adenosyl-L-methionine biosynthesis; S-adenosyl-L-methionine from L-methionine: step 1/1. Catalyzes the formation of S-adenosylmethionine from methionine and ATP. This is S-adenosylmethionine synthase from Methanococcus vannielii (strain ATCC 35089 / DSM 1224 / JCM 13029 / OCM 148 / SB).